The chain runs to 212 residues: uncharacterized protein (212 aa).

Transmembrane regions (helical) follow at residues 20–40, 70–90, 155–175, and 192–212; these read FLIG…LIIC, LMLL…YWLG, FVLI…YLGE, and QIVI…MEKI.

It belongs to the DedA family.

The protein localises to the cell membrane. This is an uncharacterized protein from Haemophilus influenzae (strain ATCC 51907 / DSM 11121 / KW20 / Rd).